The following is a 159-amino-acid chain: ATP synthase subunit b', chloroplastic (159 aa).

Residues 30–47 (LMALQFLALTIILNLIYY) traverse the membrane as a helical segment.

This sequence belongs to the ATPase B chain family. As to quaternary structure, F-type ATPases have 2 components, F(1) - the catalytic core - and F(0) - the membrane proton channel. F(1) has five subunits: alpha(3), beta(3), gamma(1), delta(1), epsilon(1). F(0) has four main subunits: a(1), b(1), b'(1) and c(10-14). The alpha and beta chains form an alternating ring which encloses part of the gamma chain. F(1) is attached to F(0) by a central stalk formed by the gamma and epsilon chains, while a peripheral stalk is formed by the delta, b and b' chains.

It localises to the plastid. The protein resides in the chloroplast thylakoid membrane. In terms of biological role, f(1)F(0) ATP synthase produces ATP from ADP in the presence of a proton or sodium gradient. F-type ATPases consist of two structural domains, F(1) containing the extramembraneous catalytic core and F(0) containing the membrane proton channel, linked together by a central stalk and a peripheral stalk. During catalysis, ATP synthesis in the catalytic domain of F(1) is coupled via a rotary mechanism of the central stalk subunits to proton translocation. Its function is as follows. Component of the F(0) channel, it forms part of the peripheral stalk, linking F(1) to F(0). The b'-subunit is a diverged and duplicated form of b found in plants and photosynthetic bacteria. The chain is ATP synthase subunit b', chloroplastic from Antithamnion sp. (Red alga).